We begin with the raw amino-acid sequence, 427 residues long: Serine hydroxymethyltransferase (427 aa).

Residues Leu122 and 126-128 (GHL) each bind (6S)-5,6,7,8-tetrahydrofolate. Residue Lys231 is modified to N6-(pyridoxal phosphate)lysine. 355–357 (SPF) provides a ligand contact to (6S)-5,6,7,8-tetrahydrofolate.

The protein belongs to the SHMT family. In terms of assembly, homodimer. Pyridoxal 5'-phosphate is required as a cofactor.

Its subcellular location is the cytoplasm. It carries out the reaction (6R)-5,10-methylene-5,6,7,8-tetrahydrofolate + glycine + H2O = (6S)-5,6,7,8-tetrahydrofolate + L-serine. It participates in one-carbon metabolism; tetrahydrofolate interconversion. The protein operates within amino-acid biosynthesis; glycine biosynthesis; glycine from L-serine: step 1/1. Functionally, catalyzes the reversible interconversion of serine and glycine with tetrahydrofolate (THF) serving as the one-carbon carrier. This reaction serves as the major source of one-carbon groups required for the biosynthesis of purines, thymidylate, methionine, and other important biomolecules. Also exhibits THF-independent aldolase activity toward beta-hydroxyamino acids, producing glycine and aldehydes, via a retro-aldol mechanism. The polypeptide is Serine hydroxymethyltransferase (Nostoc punctiforme (strain ATCC 29133 / PCC 73102)).